Reading from the N-terminus, the 335-residue chain is MTIQTSRTLSHSLGSRASSSAVAYQTECVESHRDDNGVHYGKFALGPLERGQGITVGNALRRVLLSNLEGTAVTAVRIAGVTHEFSTVPGVREDVMEILLNMKELVLRSSSPETQVGRLVAQGPGEVTAEKLQLPSDVEVINPRHHIATLAEGAILEMEFMIGRGHGYRAVDYSDSKAMAIDFLQIDSVFMPVRKVNYAVEAARVGQFLEKDRLVLEIWTNGSLTPQEALSQAARILVGLFAPLQEVSFDAPVPPKPDEDNQKNQIPIEELQLSVRAYNCLKRAQINTVADLLLYTEEDLLEIKNFGQKSAEEVVQALKARFGLTLPRTREKGKA.

Residues 1–248 (MTIQTSRTLS…GLFAPLQEVS (248 aa)) form an alpha N-terminal domain (alpha-NTD) region. The segment at 256–335 (KPDEDNQKNQ…LPRTREKGKA (80 aa)) is alpha C-terminal domain (alpha-CTD).

This sequence belongs to the RNA polymerase alpha chain family. As to quaternary structure, in cyanobacteria the RNAP catalytic core is composed of 2 alpha, 1 beta, 1 beta', 1 gamma and 1 omega subunit. When a sigma factor is associated with the core the holoenzyme is formed, which can initiate transcription.

The enzyme catalyses RNA(n) + a ribonucleoside 5'-triphosphate = RNA(n+1) + diphosphate. In terms of biological role, DNA-dependent RNA polymerase catalyzes the transcription of DNA into RNA using the four ribonucleoside triphosphates as substrates. The chain is DNA-directed RNA polymerase subunit alpha from Synechococcus sp. (strain JA-2-3B'a(2-13)) (Cyanobacteria bacterium Yellowstone B-Prime).